Consider the following 153-residue polypeptide: Aspartate carbamoyltransferase regulatory chain (153 aa).

Residues cysteine 108, cysteine 113, cysteine 137, and cysteine 140 each contribute to the Zn(2+) site.

It belongs to the PyrI family. As to quaternary structure, contains catalytic and regulatory chains. The cofactor is Zn(2+).

Involved in allosteric regulation of aspartate carbamoyltransferase. This is Aspartate carbamoyltransferase regulatory chain from Methanosphaera stadtmanae (strain ATCC 43021 / DSM 3091 / JCM 11832 / MCB-3).